A 201-amino-acid polypeptide reads, in one-letter code: Lipoprotein signal peptidase (201 aa).

Transmembrane regions (helical) follow at residues 73-93 (SNAI…YLMI) and 97-117 (TIGS…NLID). Active-site residues include Asp126 and Asp144. The helical transmembrane segment at 135 to 155 (YSFPVFNLADCFIIIGVIILI) threads the bilayer.

It belongs to the peptidase A8 family.

Its subcellular location is the cell inner membrane. The enzyme catalyses Release of signal peptides from bacterial membrane prolipoproteins. Hydrolyzes -Xaa-Yaa-Zaa-|-(S,diacylglyceryl)Cys-, in which Xaa is hydrophobic (preferably Leu), and Yaa (Ala or Ser) and Zaa (Gly or Ala) have small, neutral side chains.. It participates in protein modification; lipoprotein biosynthesis (signal peptide cleavage). This protein specifically catalyzes the removal of signal peptides from prolipoproteins. The chain is Lipoprotein signal peptidase from Rickettsia conorii (strain ATCC VR-613 / Malish 7).